The primary structure comprises 82 residues: Small ribosomal subunit protein uS17 (82 aa).

Belongs to the universal ribosomal protein uS17 family. Part of the 30S ribosomal subunit.

Functionally, one of the primary rRNA binding proteins, it binds specifically to the 5'-end of 16S ribosomal RNA. The protein is Small ribosomal subunit protein uS17 of Bradyrhizobium sp. (strain BTAi1 / ATCC BAA-1182).